A 447-amino-acid polypeptide reads, in one-letter code: Putative branched-chain amino acid carrier protein SERP0977 (447 aa).

Helical transmembrane passes span 5–25 (TWII…LIFP), 40–60 (ILAF…VGAL), 74–94 (PRFS…LFAI), 114–134 (GNLA…YLCL), 143–163 (IGSL…IKGF), 193–213 (GYLT…VNAI), 229–249 (IIAG…LGYI), 290–310 (LLGI…IVSV), 317–337 (IIPK…SFIL), 350–370 (VPVL…ILIA), 382–402 (IPLI…QGWI), and 417–437 (LEWF…SYFV).

It belongs to the branched chain amino acid transporter family.

It is found in the cell membrane. Its function is as follows. Component of the transport system for branched-chain amino acids (leucine, isoleucine and valine), which is coupled to a proton motive force. The protein is Putative branched-chain amino acid carrier protein SERP0977 of Staphylococcus epidermidis (strain ATCC 35984 / DSM 28319 / BCRC 17069 / CCUG 31568 / BM 3577 / RP62A).